Reading from the N-terminus, the 282-residue chain is Pantothenate synthetase (282 aa).

Residue 30-37 (MGYFHEGH) participates in ATP binding. Catalysis depends on H37, which acts as the Proton donor. Q61 provides a ligand contact to (R)-pantoate. Q61 contributes to the beta-alanine binding site. An ATP-binding site is contributed by 147 to 150 (GQKD). Residue Q153 coordinates (R)-pantoate. Residues V176 and 184–187 (LSSR) contribute to the ATP site.

Belongs to the pantothenate synthetase family. Homodimer.

The protein resides in the cytoplasm. The enzyme catalyses (R)-pantoate + beta-alanine + ATP = (R)-pantothenate + AMP + diphosphate + H(+). The protein operates within cofactor biosynthesis; (R)-pantothenate biosynthesis; (R)-pantothenate from (R)-pantoate and beta-alanine: step 1/1. Functionally, catalyzes the condensation of pantoate with beta-alanine in an ATP-dependent reaction via a pantoyl-adenylate intermediate. This Maridesulfovibrio salexigens (strain ATCC 14822 / DSM 2638 / NCIMB 8403 / VKM B-1763) (Desulfovibrio salexigens) protein is Pantothenate synthetase.